The primary structure comprises 77 residues: Large ribosomal subunit protein eL20 (77 aa).

The protein belongs to the eukaryotic ribosomal protein eL20 family. As to quaternary structure, part of the 50S ribosomal subunit. Binds 23S rRNA.

The chain is Large ribosomal subunit protein eL20 from Pyrococcus horikoshii (strain ATCC 700860 / DSM 12428 / JCM 9974 / NBRC 100139 / OT-3).